Here is a 68-residue protein sequence, read N- to C-terminus: Protein SlyX homolog (68 aa).

It belongs to the SlyX family.

The chain is Protein SlyX homolog from Brucella suis (strain ATCC 23445 / NCTC 10510).